The following is a 78-amino-acid chain: Antimicrobial peptide marcin-18 (78 aa).

The first 23 residues, 1–23, serve as a signal peptide directing secretion; it reads MQFKKQLMVIFLAYFLVVNESEA. Arginine amide is present on R41. A propeptide spanning residues 42–78 is cleaved from the precursor; it reads RKNQRSRSIMKRDLENLFDPYQRNLELDRLLKQLPNY.

This sequence belongs to the non-disulfide-bridged peptide (NDBP) superfamily. Medium-length antimicrobial peptide (group 3) family. As to expression, expressed by the venom gland.

The protein resides in the secreted. It localises to the target cell membrane. Its function is as follows. Antimicrobial peptide with potent activity against bacteria. Acts by fastly disrupting the bacterial membrane. Shows activity against Gram-positive bacteria S.aureus (MIC=1.5-2.9 uM) and S.epidermidis (MIC=2.9 uM), M.luteus (MIC=23.4 uM), B.thuringiensis (MIC=2.9 uM), B.subtilis (MIC=2.9 uM) and Gram-negative bacteria E.coli (MIC=5.9-11.7 uM) and P.aeruginosa (MIC=5.9 uM), as well as against penicillin (MIC=2.9 uM) and methicillin (MIC=1.5-2.9 uM) resistant bacteria. Antibiotic activity is not affected by major negatively charged components of the prokaryotic cell wall (e.g. lipopolysaccharides and lipoteichoic acid). In vivo, in a mouse model of lethal peritonitis, shows potent antibiotic activity without cytotoxicity, improving the survival rate. In Olivierus martensii (Manchurian scorpion), this protein is Antimicrobial peptide marcin-18.